We begin with the raw amino-acid sequence, 201 residues long: Small ribosomal subunit protein uS4c (201 aa).

The 62-residue stretch at 89-150 (MRLDNILFRL…KQRSKVLIQN (62 aa)) folds into the S4 RNA-binding domain.

The protein belongs to the universal ribosomal protein uS4 family. In terms of assembly, part of the 30S ribosomal subunit. Contacts protein S5. The interaction surface between S4 and S5 is involved in control of translational fidelity.

It localises to the plastid. The protein resides in the chloroplast. Functionally, one of the primary rRNA binding proteins, it binds directly to 16S rRNA where it nucleates assembly of the body of the 30S subunit. With S5 and S12 plays an important role in translational accuracy. The protein is Small ribosomal subunit protein uS4c (rps4) of Dioscorea elephantipes (Elephant's foot yam).